We begin with the raw amino-acid sequence, 125 residues long: Splicing factor 3B subunit 6 (125 aa).

The interaction with pre-mRNA branch site stretch occupies residues 16 to 29; sequence EVNRILYIRNLPYK. Positions 19 to 94 constitute an RRM domain; it reads RILYIRNLPY…RYLVVLYYNA (76 aa). At K29 the chain carries N6-acetyllysine; alternate. Residue K29 forms a Glycyl lysine isopeptide (Lys-Gly) (interchain with G-Cter in SUMO2); alternate linkage. Residue K41 is modified to N6-acetyllysine.

In terms of assembly, component of the 17S U2 SnRNP complex, a ribonucleoprotein complex that contains small nuclear RNA (snRNA) U2 and a number of specific proteins. Part of the SF3B subcomplex of the 17S U2 SnRNP complex. SF3B associates with the splicing subcomplex SF3A and a 12S RNA unit to form the U2 small nuclear ribonucleoproteins complex (U2 snRNP). Within the SF3B complex interacts directly with SF3B1. Component of the minor spliceosome, which splices U12-type introns.

It localises to the nucleus. Its function is as follows. Component of the 17S U2 SnRNP complex of the spliceosome, a large ribonucleoprotein complex that removes introns from transcribed pre-mRNAs. The 17S U2 SnRNP complex (1) directly participates in early spliceosome assembly and (2) mediates recognition of the intron branch site during pre-mRNA splicing by promoting the selection of the pre-mRNA branch-site adenosine, the nucleophile for the first step of splicing. Within the 17S U2 SnRNP complex, SF3B6 is part of the SF3B subcomplex, which is required for 'A' complex assembly formed by the stable binding of U2 snRNP to the branchpoint sequence in pre-mRNA. Sequence independent binding of SF3A and SF3B subcomplexes upstream of the branch site is essential, it may anchor U2 snRNP to the pre-mRNA. Within the 17S U2 SnRNP complex, SF3B6 directly contacts the pre-mRNA branch site adenosine for the first catalytic step of splicing. SF3B6 stabilizes the intron branch site-U2 snRNA duplex, thereby promoting-binding of introns with poor sequence complementarity. Also acts as a component of the minor spliceosome, which is involved in the splicing of U12-type introns in pre-mRNAs. The protein is Splicing factor 3B subunit 6 (Sf3b6) of Mus musculus (Mouse).